An 86-amino-acid chain; its full sequence is U2-sicaritoxin-Li1a (86 aa).

Residues 1–20 form the signal peptide; it reads MTFKLFVVVTLVLAIYVATA. The propeptide occupies 21–33; the sequence is EEAMKDDSEPAER. Intrachain disulfides connect Cys-35–Cys-53, Cys-42–Cys-62, Cys-52–Cys-71, and Cys-64–Cys-69.

Belongs to the neurotoxin 39 family. In terms of tissue distribution, expressed by the venom gland.

It is found in the secreted. Functionally, toxin active against S.frugiperda larvae. May act on sodium channels (Nav). This is U2-sicaritoxin-Li1a from Loxosceles intermedia (Brown spider).